The following is a 473-amino-acid chain: UDP-N-acetylmuramate--L-alanine ligase (473 aa).

114–120 is an ATP binding site; that stretch reads GTHGKTT.

This sequence belongs to the MurCDEF family.

The protein resides in the cytoplasm. The catalysed reaction is UDP-N-acetyl-alpha-D-muramate + L-alanine + ATP = UDP-N-acetyl-alpha-D-muramoyl-L-alanine + ADP + phosphate + H(+). The protein operates within cell wall biogenesis; peptidoglycan biosynthesis. Its function is as follows. Cell wall formation. The protein is UDP-N-acetylmuramate--L-alanine ligase of Chlorobium luteolum (strain DSM 273 / BCRC 81028 / 2530) (Pelodictyon luteolum).